Consider the following 288-residue polypeptide: Elongation factor Ts (288 aa).

The segment at Thr82–Val85 is involved in Mg(2+) ion dislocation from EF-Tu.

It belongs to the EF-Ts family.

The protein resides in the cytoplasm. Its function is as follows. Associates with the EF-Tu.GDP complex and induces the exchange of GDP to GTP. It remains bound to the aminoacyl-tRNA.EF-Tu.GTP complex up to the GTP hydrolysis stage on the ribosome. The sequence is that of Elongation factor Ts from Pelodictyon phaeoclathratiforme (strain DSM 5477 / BU-1).